Consider the following 701-residue polypeptide: UvrABC system protein B (701 aa).

The region spanning 35 to 422 (RRIQGGAADT…GGDVVEQVIR (388 aa)) is the Helicase ATP-binding domain. Position 48–55 (48–55 (GATGTGKT)) interacts with ATP. The Beta-hairpin motif lies at 101-124 (YYDYYQPEAYVPQTDTYIEKDSSI). A Helicase C-terminal domain is found at 439–605 (QIDDLVHEIR…PLRKKIADIL (167 aa)). A disordered region spans residues 620-648 (ARSRGEKRGTPTPRSGALSGPDRVAEQAK). The UVR domain maps to 656-691 (AALVEQLTEQMHQAAADLQFELAARLRDEIKELKRE).

Belongs to the UvrB family. In terms of assembly, forms a heterotetramer with UvrA during the search for lesions. Interacts with UvrC in an incision complex.

The protein resides in the cytoplasm. The UvrABC repair system catalyzes the recognition and processing of DNA lesions. A damage recognition complex composed of 2 UvrA and 2 UvrB subunits scans DNA for abnormalities. Upon binding of the UvrA(2)B(2) complex to a putative damaged site, the DNA wraps around one UvrB monomer. DNA wrap is dependent on ATP binding by UvrB and probably causes local melting of the DNA helix, facilitating insertion of UvrB beta-hairpin between the DNA strands. Then UvrB probes one DNA strand for the presence of a lesion. If a lesion is found the UvrA subunits dissociate and the UvrB-DNA preincision complex is formed. This complex is subsequently bound by UvrC and the second UvrB is released. If no lesion is found, the DNA wraps around the other UvrB subunit that will check the other stand for damage. The chain is UvrABC system protein B from Thermobifida fusca (strain YX).